The chain runs to 500 residues: Probable lipoprotein aminopeptidase LpqL (500 aa).

The first 24 residues, 1-24 (MVNKSRMMPAVLAVAVVVAFLTTG), serve as a signal peptide directing secretion. The N-palmitoyl cysteine moiety is linked to residue cysteine 25. The S-diacylglycerol cysteine moiety is linked to residue cysteine 25. A PA domain is found at 140–231 (VTGPLVAAPA…VTKSVGFQLR (92 aa)). Zn(2+) is bound by residues histidine 271 and aspartate 283. The active-site Proton acceptor is glutamate 316. Glutamate 317, aspartate 345, and histidine 448 together coordinate Zn(2+).

This sequence belongs to the peptidase M28 family. M28A subfamily. Zn(2+) is required as a cofactor. In terms of processing, modified by Lgt on Cys-25 with an S-linked diacylglycerol with a mixture of C16 and C19 fatty acids (palmitic and tuberculostearic acid), signal peptide is removed by LspA, modified by Lnt with an amide-linked mixture of C16 and C19 fatty acids, expressed in M.bovis.

The protein localises to the cell membrane. It catalyses the reaction Release of an N-terminal amino acid, Xaa-|-Yaa-, in which Xaa is preferably Leu, but may be other amino acids including Pro although not Arg or Lys, and Yaa may be Pro. Amino acid amides and methyl esters are also readily hydrolyzed, but rates on arylamides are exceedingly low.. Its function is as follows. An aminopeptidase; acts on free N-terminal amino groups with a very strong preference for Leu in the first position. This chain is Probable lipoprotein aminopeptidase LpqL (lpqL), found in Mycobacterium tuberculosis (strain ATCC 25618 / H37Rv).